A 416-amino-acid polypeptide reads, in one-letter code: ABSCISIC ACID-INSENSITIVE 5-like protein 5 (416 aa).

The disordered stretch occupies residues 1–23 (MDGSMNLGNEPPGDGGGGGGLTR). Residues 13–22 (GDGGGGGGLT) are compositionally biased toward gly residues. Phosphoserine occurs at positions 26, 45, and 86. Position 135 is a phosphothreonine (Thr135). The tract at residues 300-326 (SEGIGKSNGDSSSLSPSPYMFNGGVRG) is disordered. Residues 336–399 (VERRQRRMIK…KNQETEMRNL (64 aa)) enclose the bZIP domain. The interval 338–357 (RRQRRMIKNRESAARSRARK) is basic motif. The tract at residues 364–385 (LEAEVAKLKEENDELQRKQARI) is leucine-zipper. The segment at 388–416 (MQKNQETEMRNLLQGGPKKKLRRTESGPW) is disordered.

This sequence belongs to the bZIP family. ABI5 subfamily. As to quaternary structure, DNA-binding heterodimer. Interacts with ARIA. Post-translationally, the activation by phosphorylation is induced by abscisic acid (ABA). Phosphorylated by SRK2C, SRK2D, SRK2E, SRK2F and SRK2I in vitro. In terms of tissue distribution, expressed in roots, leaves, flowers and siliques but not in seeds.

It localises to the nucleus. In terms of biological role, involved in ABA and stress responses and acts as a positive component of glucose signal transduction. Functions as a transcriptional activator in the ABA-inducible expression of rd29B. Binds specifically to the ABA-responsive element (ABRE) of the rd29B gene promoter. The chain is ABSCISIC ACID-INSENSITIVE 5-like protein 5 (ABF2) from Arabidopsis thaliana (Mouse-ear cress).